We begin with the raw amino-acid sequence, 122 residues long: Big defensin (122 aa).

Positions 1–28 are cleaved as a signal peptide; sequence MTRPSLVRCYSLFFTALIVMAIICPAWS. The propeptide occupies 29 to 34; that stretch reads EEIPKS. Disulfide bonds link C88–C119, C95–C114, and C99–C120.

It belongs to the big defensin family. As to expression, expressed in hemocytes.

The protein resides in the secreted. Functionally, significantly inhibits the growth of Gram-negative and Gram-positive bacteria and fungi in vitro. The sequence is that of Big defensin from Argopecten irradians (Bay scallop).